A 446-amino-acid polypeptide reads, in one-letter code: Divalent metal cation transporter MntH (446 aa).

11 helical membrane passes run 32 to 52 (FSFL…GNWI), 59 to 79 (AQFG…AMLL), 107 to 127 (AFVF…AEVI), 139 to 159 (IPLL…LFIM), 168 to 188 (AIVG…VFIA), 210 to 230 (GALF…NLYL), 264 to 284 (SIAF…FFGV), 303 to 323 (PLLG…ALLA), 355 to 375 (LITR…FNSN), 381 to 401 (QLLV…LIPL), and 420 to 440 (VNII…YLII).

The protein belongs to the NRAMP family.

Its subcellular location is the cell membrane. In terms of biological role, h(+)-stimulated, divalent metal cation uptake system. In Staphylococcus saprophyticus subsp. saprophyticus (strain ATCC 15305 / DSM 20229 / NCIMB 8711 / NCTC 7292 / S-41), this protein is Divalent metal cation transporter MntH.